The chain runs to 376 residues: Chaperone protein DnaJ (376 aa).

The region spanning 5 to 70 (DYYEVLGVAK…QKRAAYDQYG (66 aa)) is the J domain. The CR-type zinc-finger motif lies at 136–214 (GYDTQIRVPS…CHGSGKVKET (79 aa)). Cys-149, Cys-152, Cys-166, Cys-169, Cys-188, Cys-191, Cys-202, and Cys-205 together coordinate Zn(2+). 4 CXXCXGXG motif repeats span residues 149-156 (CGVCHGSG), 166-173 (CPTCHGQG), 188-195 (CPKCHGTG), and 202-209 (CVHCHGSG).

The protein belongs to the DnaJ family. Homodimer. The cofactor is Zn(2+).

Its subcellular location is the cytoplasm. Its function is as follows. Participates actively in the response to hyperosmotic and heat shock by preventing the aggregation of stress-denatured proteins and by disaggregating proteins, also in an autonomous, DnaK-independent fashion. Unfolded proteins bind initially to DnaJ; upon interaction with the DnaJ-bound protein, DnaK hydrolyzes its bound ATP, resulting in the formation of a stable complex. GrpE releases ADP from DnaK; ATP binding to DnaK triggers the release of the substrate protein, thus completing the reaction cycle. Several rounds of ATP-dependent interactions between DnaJ, DnaK and GrpE are required for fully efficient folding. Also involved, together with DnaK and GrpE, in the DNA replication of plasmids through activation of initiation proteins. The polypeptide is Chaperone protein DnaJ (Burkholderia pseudomallei (strain 1710b)).